The following is a 1356-amino-acid chain: Collagen alpha-2(I) chain (1356 aa).

The N-terminal stretch at 1–22 (MLSFVDNRILLLLAVTSLLASC) is a signal peptide. A disordered region spans residues 22–1112 (CQSGGLKGPR…DQSGGYDEYR (1091 aa)). Gln23 and Gln73 each carry pyrrolidone carboxylic acid. The propeptide at 23–72 (QSGGLKGPRGAKGPRGDRGPQGPNGRDGKAGLPGIAGPPGPPGLGGNFAA) is N-terminal propeptide. Positions 76-88 (GGKGSDPGPGPMG) are enriched in gly residues. Lys78 is subject to Allysine. At Lys171 the chain carries 5-hydroxylysine; alternate. An O-linked (Gal...) hydroxylysine; alternate glycan is attached at Lys171. The segment covering 219–248 (AGPAGPAGARGADGSTGPAGPAGPLGAAGP) has biased composition (low complexity). Gly residues predominate over residues 259 to 280 (GEIGGAGSNGPSGPQGGRGEPG). Low complexity predominate over residues 281–315 (INGAVGPVGPVGNPGNNGINGAKGAAGLPGVAGAP). A compositionally biased stretch (pro residues) spans 317 to 327 (FPGPRGGPGPQ). Gly residues-rich tracts occupy residues 334–343 (GARGLGGDPG), 391–412 (GARG…GPIG), 418–427 (GATGPGGIRG), and 448–457 (GNSGQGGPPG). Over residues 479-489 (PRGQPGNIGFP) the composition is skewed to low complexity. Residues 511-520 (GLRGGPGADG) are compositionally biased toward gly residues. Composition is skewed to low complexity over residues 521–564 (NNGA…AGKA) and 587–603 (NSGP…IGAR). 2 stretches are compositionally biased toward gly residues: residues 610–619 (GPDGGKGEPG) and 628–646 (GHQG…GTPG). Basic and acidic residues predominate over residues 648-659 (KGEKGEGGHRGL). Residues 716 to 731 (LPGFAGPPGSDGQSGP) are compositionally biased toward low complexity. Residues 736 to 745 (GPAGGKGDVG) are compositionally biased toward gly residues. 2 stretches are compositionally biased toward low complexity: residues 746 to 764 (PAGP…ASGP) and 776 to 786 (PSGLTGFPGAA). Gly residues predominate over residues 787-796 (GRVGGPGPAG). Residues 797–809 (IAGPPGSAGPAGK) are compositionally biased toward low complexity. A compositionally biased stretch (gly residues) spans 817–826 (GDPGPGGPQG). The span at 827-858 (EQGVVGPAGISGDKGPSGESGPPGAPGTAGPQ) shows a compositional bias: low complexity. Over residues 877–886 (GLPGGPGAVG) the composition is skewed to gly residues. The span at 888–903 (PGRLGPAGASGPRGPA) shows a compositional bias: low complexity. The segment covering 976–985 (GPTGNGGPVG) has biased composition (gly residues). Residues 999–1013 (RGEKGGAGEKGDRGM) show a composition bias toward basic and acidic residues. Pro residues predominate over residues 1083 to 1095 (AGPPGSPGLPGPA). Residues 1114–1356 (DQPSFRAKDY…GLDIGPVCFK (243 aa)) constitute a propeptide, C-terminal propeptide. A Fibrillar collagen NC1 domain is found at 1123–1356 (YEVDATIKSL…GLDIGPVCFK (234 aa)). 3 cysteine pairs are disulfide-bonded: Cys1153–Cys1185, Cys1193–Cys1354, and Cys1262–Cys1307. Positions 1171, 1173, 1174, 1176, and 1179 each coordinate Ca(2+). The N-linked (GlcNAc...) asparagine glycan is linked to Asn1257.

It belongs to the fibrillar collagen family. In terms of assembly, trimers of one alpha 2(I) and two alpha 1(I) chains. In terms of processing, prolines at the third position of the tripeptide repeating unit (G-X-Y) are hydroxylated in some or all of the chains. Forms the fibrils of tendon, ligaments and bones. In bones the fibrils are mineralized with calcium hydroxyapatite.

It localises to the secreted. It is found in the extracellular space. The protein resides in the extracellular matrix. In terms of biological role, type I collagen is a member of group I collagen (fibrillar forming collagen). This is Collagen alpha-2(I) chain (col1a2) from Oncorhynchus mykiss (Rainbow trout).